The following is a 512-amino-acid chain: Cytochrome P450 monooxygenase adrA (512 aa).

Residues phenylalanine 12–alanine 32 form a helical membrane-spanning segment. Asparagine 86, asparagine 149, and asparagine 210 each carry an N-linked (GlcNAc...) asparagine glycan. Cysteine 453 lines the heme pocket.

It belongs to the cytochrome P450 family. The cofactor is heme.

It is found in the membrane. Its pathway is secondary metabolite biosynthesis; terpenoid biosynthesis. Cytochrome P450 monooxygenase; part of the gene cluster that mediates the biosynthesis of andrastins, meroterpenoid compounds that exhibit inhibitory activity against ras farnesyltransferase, suggesting that they could be promising leads for antitumor agents. The first step of the pathway is the synthesis of 3,5-dimethylorsellinic acid (DMOA) by the polyketide synthase adrD via condensation of one acetyl-CoA starter unit with 3 malonyl-CoA units and 2 methylations. DMAO is then converted to farnesyl-DMAO by the prenyltransferase adrG. The methyltransferase adrK catalyzes the methylation of the carboxyl group of farnesyl-DMAO to farnesyl-DMAO methyl ester which is further converted to epoxyfarnesyl-DMAO methyl ester by the FAD-dependent monooxygenase adrH. The terpene cyclase adrI then catalyzes the carbon skeletal rearrangement to generate the andrastin E, the first compound in the pathway having the andrastin scaffold, with the tetracyclic ring system. The post-cyclization tailoring enzymes adrF, adrE, adrJ, and adrA, are involved in the conversion of andrastin E into andrastin A. The short chain dehydrogenase adrF is responsible for the oxidation of the C-3 a hydroxyl group of andrastin E to yield the corresponding ketone, andrastin D. The ketoreductase adrE stereoselectively reduces the carbonyl moiety to reverse the stereochemistry of the C-3 position to yield andrastin F. The acetyltransferase adrJ is the acetyltransferase that attaches the acetyl group to the C-3 hydroxyl group of andrastin F to yield andrastin C. Finally, the cytochrome P450 monooxygenase adrA catalyzes two sequential oxidation reactions of the C-23 methyl group, to generate the corresponding alcohol andrastin B, and aldehyde andrastin A. The polypeptide is Cytochrome P450 monooxygenase adrA (Penicillium rubens (strain ATCC 28089 / DSM 1075 / NRRL 1951 / Wisconsin 54-1255) (Penicillium chrysogenum)).